The following is a 43-amino-acid chain: Potassium channel toxin gamma-KTx 4.9 (43 aa).

4 cysteine pairs are disulfide-bonded: cysteine 5–cysteine 23, cysteine 11–cysteine 34, cysteine 20–cysteine 39, and cysteine 24–cysteine 41.

Belongs to the ergtoxin family. Gamma-KTx 4 subfamily. As to expression, expressed by the venom gland.

It is found in the secreted. Functionally, reversibly blocks Kv11/ERG potassium channels. In Centruroides sculpturatus (Arizona bark scorpion), this protein is Potassium channel toxin gamma-KTx 4.9.